The primary structure comprises 168 residues: Pathogenesis-related protein 1C (168 aa).

Positions 1 to 30 (MEFVLFSQMSSFFLVSTLLLFLIISHSCHA) are cleaved as a signal peptide. In terms of domain architecture, SCP spans 38-156 (LDAHNTARAD…NGGYIVSCNY (119 aa)).

The protein belongs to the CRISP family. In terms of processing, three disulfide bonds are present.

Its subcellular location is the vacuole. In terms of biological role, probably involved in the defense reaction of plants against pathogens. This Nicotiana tabacum (Common tobacco) protein is Pathogenesis-related protein 1C.